The chain runs to 86 residues: Photosystem I reaction center subunit PsaK (86 aa).

Transmembrane regions (helical) follow at residues 15–35 and 57–77; these read SWSISTAIIMVICNLLCIGLG and GLPELLATTSLGHIIGAGAII.

This sequence belongs to the PsaG/PsaK family.

Its subcellular location is the plastid. The protein localises to the chloroplast thylakoid membrane. In Gracilaria tenuistipitata var. liui (Red alga), this protein is Photosystem I reaction center subunit PsaK.